A 443-amino-acid chain; its full sequence is ATP-dependent protease ATPase subunit HslU (443 aa).

Residues Ile-18, 60 to 65 (GVGKTE), Asp-256, Glu-321, and Arg-393 each bind ATP.

The protein belongs to the ClpX chaperone family. HslU subfamily. A double ring-shaped homohexamer of HslV is capped on each side by a ring-shaped HslU homohexamer. The assembly of the HslU/HslV complex is dependent on binding of ATP.

Its subcellular location is the cytoplasm. In terms of biological role, ATPase subunit of a proteasome-like degradation complex; this subunit has chaperone activity. The binding of ATP and its subsequent hydrolysis by HslU are essential for unfolding of protein substrates subsequently hydrolyzed by HslV. HslU recognizes the N-terminal part of its protein substrates and unfolds these before they are guided to HslV for hydrolysis. The sequence is that of ATP-dependent protease ATPase subunit HslU from Vibrio parahaemolyticus serotype O3:K6 (strain RIMD 2210633).